We begin with the raw amino-acid sequence, 445 residues long: Tubulin beta-1 chain (445 aa).

8 residues coordinate GTP: Gln11, Glu69, Ser138, Gly142, Thr143, Gly144, Asn204, and Asn226. Glu69 contributes to the Mg(2+) binding site. Residues 422–445 (QYQDAGMDDEYGEEYEDEAPAEEE) form a disordered region. Over residues 427–445 (GMDDEYGEEYEDEAPAEEE) the composition is skewed to acidic residues.

The protein belongs to the tubulin family. In terms of assembly, dimer of alpha and beta chains. A typical microtubule is a hollow water-filled tube with an outer diameter of 25 nm and an inner diameter of 15 nM. Alpha-beta heterodimers associate head-to-tail to form protofilaments running lengthwise along the microtubule wall with the beta-tubulin subunit facing the microtubule plus end conferring a structural polarity. Microtubules usually have 13 protofilaments but different protofilament numbers can be found in some organisms and specialized cells. Mg(2+) serves as cofactor.

The protein resides in the cytoplasm. It is found in the cytoskeleton. Functionally, tubulin is the major constituent of microtubules, a cylinder consisting of laterally associated linear protofilaments composed of alpha- and beta-tubulin heterodimers. Microtubules grow by the addition of GTP-tubulin dimers to the microtubule end, where a stabilizing cap forms. Below the cap, tubulin dimers are in GDP-bound state, owing to GTPase activity of alpha-tubulin. This chain is Tubulin beta-1 chain (TUB1), found in Colletotrichum graminicola (Maize anthracnose fungus).